Consider the following 378-residue polypeptide: Succinate--CoA ligase [ADP-forming] subunit beta (378 aa).

Residues 9–237 (RDIVARYGIP…IAGEPESEIK (229 aa)) form the ATP-grasp domain. ATP-binding positions include Lys-45, 52–54 (GRG), Ile-94, and Glu-99. Residues Asn-192 and Asp-206 each coordinate Mg(2+). Substrate-binding positions include Asn-257 and 314 to 316 (GIT).

It belongs to the succinate/malate CoA ligase beta subunit family. As to quaternary structure, heterotetramer of two alpha and two beta subunits. The cofactor is Mg(2+).

The enzyme catalyses succinate + ATP + CoA = succinyl-CoA + ADP + phosphate. The catalysed reaction is GTP + succinate + CoA = succinyl-CoA + GDP + phosphate. Its pathway is carbohydrate metabolism; tricarboxylic acid cycle; succinate from succinyl-CoA (ligase route): step 1/1. Functionally, succinyl-CoA synthetase functions in the citric acid cycle (TCA), coupling the hydrolysis of succinyl-CoA to the synthesis of either ATP or GTP and thus represents the only step of substrate-level phosphorylation in the TCA. The beta subunit provides nucleotide specificity of the enzyme and binds the substrate succinate, while the binding sites for coenzyme A and phosphate are found in the alpha subunit. The sequence is that of Succinate--CoA ligase [ADP-forming] subunit beta from Herpetosiphon aurantiacus (strain ATCC 23779 / DSM 785 / 114-95).